The primary structure comprises 486 residues: Envelope glycoprotein gp63 (486 aa).

The signal sequence occupies residues 1 to 18 (MGNVFFLLLFSLTHFPLA). Over 19 to 438 (QQSRCTLTIG…LGLSQWAREA (420 aa)) the chain is Extracellular. N-linked (GlcNAc...) asparagine; by host glycosylation is found at N136 and N218. The CXXC signature appears at 221 to 224 (CMVC). Disulfide bonds link C221/C224, C221/C397, and C389/C396. 2 N-linked (GlcNAc...) asparagine; by host glycosylation sites follow: N240 and N286. The tract at residues 309–329 (AVPIAVWLVSALAAGTGIAGG) is fusion peptide. Coiled coils occupy residues 337–383 (ASSK…LLFW) and 393–425 (QEQC…GWGL). The tract at residues 372 to 388 (AQNRRGLDLLFWEQGGL) is immunosuppression. The short motif at 389 to 397 (CKAIQEQCC) is the CX6CC element. A glycan (N-linked (GlcNAc...) asparagine; by host) is linked at N400. Residues 439 to 459 (LQTGITILALLLLVILFGPCI) form a helical membrane-spanning segment. Residue C458 is the site of S-palmitoyl cysteine; by host attachment. Topologically, residues 460–486 (LRQIQALPQRLQNRHNQYSLINPETML) are cytoplasmic.

In terms of assembly, the mature envelope protein (Env) consists of a trimer of SU-TM heterodimers attached by a labile interchain disulfide bond. In terms of processing, specific enzymatic cleavages in vivo yield mature proteins. Envelope glycoproteins are synthesized as an inactive precursor that is N-glycosylated and processed likely by host cell furin or by a furin-like protease in the Golgi to yield the mature SU and TM proteins. The cleavage site between SU and TM requires the minimal sequence [KR]-X-[KR]-R. Post-translationally, the CXXC motif is highly conserved across a broad range of retroviral envelope proteins. It is thought to participate in the formation of a labile disulfide bond possibly with the CX6CC motif present in the transmembrane protein. Isomerization of the intersubunit disulfide bond to an SU intrachain disulfide bond is thought to occur upon receptor recognition in order to allow membrane fusion. The transmembrane protein is palmitoylated.

The protein localises to the virion membrane. It localises to the host cell membrane. Its function is as follows. The surface protein (SU) attaches the virus to the host cell by binding to its receptor. This interaction triggers the refolding of the transmembrane protein (TM) and is thought to activate its fusogenic potential by unmasking its fusion peptide. Fusion occurs at the host cell plasma membrane. In terms of biological role, the transmembrane protein (TM) acts as a class I viral fusion protein. Under the current model, the protein has at least 3 conformational states: pre-fusion native state, pre-hairpin intermediate state, and post-fusion hairpin state. During viral and target cell membrane fusion, the coiled coil regions (heptad repeats) assume a trimer-of-hairpins structure, positioning the fusion peptide in close proximity to the C-terminal region of the ectodomain. The formation of this structure appears to drive apposition and subsequent fusion of viral and target cell membranes. Membranes fusion leads to delivery of the nucleocapsid into the cytoplasm. The polypeptide is Envelope glycoprotein gp63 (env) (Homo sapiens (Human)).